Here is a 469-residue protein sequence, read N- to C-terminus: Swarming motility regulation sensor protein RssA (469 aa).

Helical transmembrane passes span 12–32 (IIFQ…WVKY) and 167–187 (VPLL…AYFS). Positions 245–459 (DAAHELRTPI…GFIIDLPESY (215 aa)) constitute a Histidine kinase domain. His248 carries the phosphohistidine; by autocatalysis modification.

The protein localises to the cell inner membrane. It carries out the reaction ATP + protein L-histidine = ADP + protein N-phospho-L-histidine.. Member of the two-component regulatory system RssA/RssB involved in regulation of swarming motility which has been shown to be inhibited by saturated fatty acids. RssA/RssB regulates cellular fatty acid composition, hemolysin production and cell surface topography. RssA/RssB negatively regulates the activity of SlhBA. It can also act as a negative regulator for the control of the swarming initiation. The sequence is that of Swarming motility regulation sensor protein RssA (rssA) from Serratia marcescens.